Consider the following 216-residue polypeptide: GTP cyclohydrolase 1 (216 aa).

3 residues coordinate Zn(2+): Cys-108, His-111, and Cys-179.

It belongs to the GTP cyclohydrolase I family. In terms of assembly, toroid-shaped homodecamer, composed of two pentamers of five dimers.

It carries out the reaction GTP + H2O = 7,8-dihydroneopterin 3'-triphosphate + formate + H(+). The protein operates within cofactor biosynthesis; 7,8-dihydroneopterin triphosphate biosynthesis; 7,8-dihydroneopterin triphosphate from GTP: step 1/1. In Shewanella sp. (strain MR-7), this protein is GTP cyclohydrolase 1.